A 109-amino-acid polypeptide reads, in one-letter code: MLFYLEEPIRGYVIILIVHPSWNDCATGHILIMLLNWHEQKEEGQHLLYLFIKHNQGYTLNILRYLLDRFDIQKDEYYNTAFQNCNNNVASYIGYDINLPTKDGIRLGV.

This is an uncharacterized protein from Bos taurus (Bovine).